Reading from the N-terminus, the 150-residue chain is Group IIC secretory phospholipase A2 (150 aa).

The signal sequence occupies residues 1–20 (MKGIAIFLVFIFYWTTSTLS). 8 disulfides stabilise this stretch: Cys46–Cys143, Cys48–Cys64, Cys63–Cys121, Cys69–Cys150, Cys70–Cys114, Cys79–Cys107, Cys97–Cys112, and Cys99–Cys105. Ca(2+)-binding residues include Tyr47, Gly49, and Gly51. The active site involves His67. Position 68 (Asp68) interacts with Ca(2+). A glycan (N-linked (GlcNAc...) asparagine) is linked at Asn92. Asp115 is a catalytic residue.

It belongs to the phospholipase A2 family. Requires Ca(2+) as cofactor. As to expression, testis specific.

It localises to the secreted. It carries out the reaction a 1,2-diacyl-sn-glycero-3-phosphocholine + H2O = a 1-acyl-sn-glycero-3-phosphocholine + a fatty acid + H(+). In terms of biological role, PA2 catalyzes the calcium-dependent hydrolysis of the 2-acyl groups in 3-sn-phosphoglycerides. Testis PA2 may be important in the production of prostaglandins, by the release of arachidonic acid, which in turn are necessary for the contractions of the seminiferous tubules and the testicular capsule; they also seem to decrease sperm transit time through the male reproductive tract. This is Group IIC secretory phospholipase A2 (Pla2g2c) from Mus musculus (Mouse).